Consider the following 96-residue polypeptide: Co-chaperonin GroES (96 aa).

This sequence belongs to the GroES chaperonin family. As to quaternary structure, heptamer of 7 subunits arranged in a ring. Interacts with the chaperonin GroEL.

The protein localises to the cytoplasm. Its function is as follows. Together with the chaperonin GroEL, plays an essential role in assisting protein folding. The GroEL-GroES system forms a nano-cage that allows encapsulation of the non-native substrate proteins and provides a physical environment optimized to promote and accelerate protein folding. GroES binds to the apical surface of the GroEL ring, thereby capping the opening of the GroEL channel. The protein is Co-chaperonin GroES of Shewanella piezotolerans (strain WP3 / JCM 13877).